The sequence spans 164 residues: NADH-quinone oxidoreductase subunit I (164 aa).

2 4Fe-4S ferredoxin-type domains span residues 55–85 (LRRY…IDAE) and 95–124 (TRYD…EGPN). The [4Fe-4S] cluster site is built by Cys-65, Cys-68, Cys-71, Cys-75, Cys-104, Cys-107, Cys-110, and Cys-114.

Belongs to the complex I 23 kDa subunit family. In terms of assembly, NDH-1 is composed of 14 different subunits. Subunits NuoA, H, J, K, L, M, N constitute the membrane sector of the complex. Requires [4Fe-4S] cluster as cofactor.

It localises to the cell inner membrane. The enzyme catalyses a quinone + NADH + 5 H(+)(in) = a quinol + NAD(+) + 4 H(+)(out). Its function is as follows. NDH-1 shuttles electrons from NADH, via FMN and iron-sulfur (Fe-S) centers, to quinones in the respiratory chain. The immediate electron acceptor for the enzyme in this species is believed to be ubiquinone. Couples the redox reaction to proton translocation (for every two electrons transferred, four hydrogen ions are translocated across the cytoplasmic membrane), and thus conserves the redox energy in a proton gradient. The protein is NADH-quinone oxidoreductase subunit I of Roseobacter denitrificans (strain ATCC 33942 / OCh 114) (Erythrobacter sp. (strain OCh 114)).